Reading from the N-terminus, the 95-residue chain is Cell division protein FtsB (95 aa).

Residues 1-3 (MKW) are Cytoplasmic-facing. The chain crosses the membrane as a helical span at residues 4–21 (VTGLLVVLLLGLQYKLWI). Topologically, residues 22-95 (GEGSVAEVWQ…QVVGRPGETP (74 aa)) are periplasmic. Residues 26–73 (VAEVWQLRQTLEAQRAENEELRYRNAALDAEVTDLKTGLDAIEERARR) are a coiled coil.

It belongs to the FtsB family. As to quaternary structure, part of a complex composed of FtsB, FtsL and FtsQ.

The protein resides in the cell inner membrane. Its function is as follows. Essential cell division protein. May link together the upstream cell division proteins, which are predominantly cytoplasmic, with the downstream cell division proteins, which are predominantly periplasmic. This Thioalkalivibrio sulfidiphilus (strain HL-EbGR7) protein is Cell division protein FtsB.